We begin with the raw amino-acid sequence, 147 residues long: Large ribosomal subunit protein uL13 (147 aa).

The protein belongs to the universal ribosomal protein uL13 family. Part of the 50S ribosomal subunit.

This protein is one of the early assembly proteins of the 50S ribosomal subunit, although it is not seen to bind rRNA by itself. It is important during the early stages of 50S assembly. The polypeptide is Large ribosomal subunit protein uL13 (Paenarthrobacter aurescens (strain TC1)).